The sequence spans 520 residues: Sensory neuron membrane protein 2 (520 aa).

Residues 1-7 (MLGKHSK) lie on the Cytoplasmic side of the membrane. A helical membrane pass occupies residues 8–28 (IFFGVSLIFLVIAIVLASWGF). Over 29–468 (QKIVNKQIQK…DSHKLLGYVE (440 aa)) the chain is Extracellular. N-linked (GlcNAc...) asparagine glycosylation is found at Asn-44, Asn-67, Asn-104, Asn-228, Asn-271, Asn-313, and Asn-342. Disulfide bonds link Cys-267-Cys-337, Cys-298-Cys-361, and Cys-339-Cys-350. The chain crosses the membrane as a helical span at residues 469–489 (VAKWFLLTIAIISVIASAVAV). Residues 490–520 (ARANALLSWPRNSNSVSFILGPSVTQVNKGN) lie on the Cytoplasmic side of the membrane.

This sequence belongs to the CD36 family. Localizes to cells surrounding the sensory neurons in the antenna. Associate in a ratio of 2:1 with the neurons expressing the other subtype SNMP1.

The protein localises to the cell membrane. In terms of biological role, plays an olfactory role that is not restricted to pheromone sensitivity. May play a role in the elimination of lipophilic components from the sensillum lymph. The polypeptide is Sensory neuron membrane protein 2 (Heliothis virescens (Tobacco budworm moth)).